A 687-amino-acid chain; its full sequence is Putative ammonium transporter 3 (687 aa).

Transmembrane regions (helical) follow at residues 39–59 (AVWI…FGLL), 77–97 (VVDV…FSYG), 134–154 (ASFL…SGAV), 162–182 (SYIL…HWVW), 196–216 (FAGC…ATVF), 240–260 (LGTF…VWGI), 272–292 (AVAT…ISFV), 299–319 (VNFL…ICAV), 323–343 (WHAL…LPLL), 352–372 (VGIV…VGIF), and 404–424 (CTAA…FLIS). 3 disordered regions span residues 521–544 (RTNA…FNNQ), 549–568 (AVSS…RRTE), and 592–687 (PPEE…NPPV). Positions 549–564 (AVSSTVSTARNGPSTG) are enriched in polar residues. Composition is skewed to low complexity over residues 614–632 (SPSS…SPSI) and 648–665 (STAS…KNST).

The protein belongs to the ammonia transporter channel (TC 1.A.11.2) family.

The protein localises to the membrane. In terms of biological role, involved in the uptake of ammonia. This chain is Putative ammonium transporter 3 (amt-3), found in Caenorhabditis elegans.